The primary structure comprises 192 residues: Ribonuclease HII (192 aa).

Residues lysine 2–valine 187 enclose the RNase H type-2 domain. A divalent metal cation-binding residues include aspartate 8, glutamate 9, and aspartate 97.

This sequence belongs to the RNase HII family. It depends on Mn(2+) as a cofactor. Mg(2+) serves as cofactor.

Its subcellular location is the cytoplasm. It carries out the reaction Endonucleolytic cleavage to 5'-phosphomonoester.. Its function is as follows. Endonuclease that specifically degrades the RNA of RNA-DNA hybrids. The polypeptide is Ribonuclease HII (Aliarcobacter butzleri (strain RM4018) (Arcobacter butzleri)).